Consider the following 608-residue polypeptide: Malonate--CoA ligase (608 aa).

It belongs to the ATP-dependent AMP-binding enzyme family. In terms of tissue distribution, expressed in flowers.

It localises to the cytoplasm. Its subcellular location is the nucleus. It catalyses the reaction malonate + ATP + CoA = malonyl-CoA + AMP + diphosphate. Malonate--CoA ligase that catalyzes the formation of malonyl-CoA directly from malonate and CoA. May be required for the detoxification of malonate. The chain is Malonate--CoA ligase (AAE13) from Arabidopsis thaliana (Mouse-ear cress).